The sequence spans 176 residues: Large ribosomal subunit protein uL6 (176 aa).

Belongs to the universal ribosomal protein uL6 family. In terms of assembly, part of the 50S ribosomal subunit.

In terms of biological role, this protein binds to the 23S rRNA, and is important in its secondary structure. It is located near the subunit interface in the base of the L7/L12 stalk, and near the tRNA binding site of the peptidyltransferase center. The sequence is that of Large ribosomal subunit protein uL6 from Paraburkholderia phytofirmans (strain DSM 17436 / LMG 22146 / PsJN) (Burkholderia phytofirmans).